A 637-amino-acid polypeptide reads, in one-letter code: Probable potassium transport system protein Kup 2 (637 aa).

A disordered region spans residues Met1 to Ala21. Helical transmembrane passes span Leu29–Phe49, Val68–Val88, Leu116–Pro136, Val150–Phe170, Val180–Leu200, Ala228–Val248, Ile258–Gly278, Ala300–Ile320, Leu359–Ala379, Ala381–Met401, Leu409–Ala429, and Ile434–Thr454.

It belongs to the HAK/KUP transporter (TC 2.A.72) family.

Its subcellular location is the cell inner membrane. The enzyme catalyses K(+)(in) + H(+)(in) = K(+)(out) + H(+)(out). Functionally, transport of potassium into the cell. Likely operates as a K(+):H(+) symporter. The sequence is that of Probable potassium transport system protein Kup 2 from Mesorhizobium japonicum (strain LMG 29417 / CECT 9101 / MAFF 303099) (Mesorhizobium loti (strain MAFF 303099)).